The chain runs to 445 residues: 26S proteasome regulatory subunit RPN5 (445 aa).

Serine 2 is subject to N-acetylserine. One can recognise a PCI domain in the interval 233–407; the sequence is EYLEVAQYLQ…KIVNFEKPKN (175 aa).

It belongs to the proteasome subunit p55 family. N-acetylated by NAT1.

Acts as a regulatory subunit of the 26S proteasome which is involved in the ATP-dependent degradation of ubiquitinated proteins. The sequence is that of 26S proteasome regulatory subunit RPN5 (RPN5) from Saccharomyces cerevisiae (strain ATCC 204508 / S288c) (Baker's yeast).